Here is a 303-residue protein sequence, read N- to C-terminus: Small ribosomal subunit protein uS2 (303 aa).

A disordered region spans residues alanine 258–glutamate 303. A compositionally biased stretch (basic and acidic residues) spans alanine 294–glutamate 303.

This sequence belongs to the universal ribosomal protein uS2 family.

This Bifidobacterium animalis subsp. lactis (strain AD011) protein is Small ribosomal subunit protein uS2.